The following is an 800-amino-acid chain: Phenylalanine--tRNA ligase beta subunit (800 aa).

The tRNA-binding domain occupies 39 to 154; that stretch reads TKDIKKLVVG…EAVKPGTDAL (116 aa). Residues 408-483 form the B5 domain; the sequence is SFVTPIEITA…RIYGYDEIPS (76 aa). 4 residues coordinate Mg(2+): aspartate 461, aspartate 467, glutamate 470, and glutamate 471. The 93-residue stretch at 708–800 folds into the FDX-ACB domain; it reads PRFPGVTRDI…ALKKHGAIIR (93 aa).

Belongs to the phenylalanyl-tRNA synthetase beta subunit family. Type 1 subfamily. As to quaternary structure, tetramer of two alpha and two beta subunits. It depends on Mg(2+) as a cofactor.

The protein localises to the cytoplasm. It catalyses the reaction tRNA(Phe) + L-phenylalanine + ATP = L-phenylalanyl-tRNA(Phe) + AMP + diphosphate + H(+). This is Phenylalanine--tRNA ligase beta subunit from Staphylococcus epidermidis (strain ATCC 12228 / FDA PCI 1200).